A 377-amino-acid chain; its full sequence is Beta sliding clamp (377 aa).

Belongs to the beta sliding clamp family. In terms of assembly, forms a ring-shaped head-to-tail homodimer around DNA which binds and tethers DNA polymerases and other proteins to the DNA. The DNA replisome complex has a single clamp-loading complex (3 tau and 1 each of delta, delta', psi and chi subunits) which binds 3 Pol III cores (1 core on the leading strand and 2 on the lagging strand) each with a beta sliding clamp dimer. Additional proteins in the replisome are other copies of gamma, psi and chi, Ssb, DNA helicase and RNA primase.

It is found in the cytoplasm. Functionally, confers DNA tethering and processivity to DNA polymerases and other proteins. Acts as a clamp, forming a ring around DNA (a reaction catalyzed by the clamp-loading complex) which diffuses in an ATP-independent manner freely and bidirectionally along dsDNA. Initially characterized for its ability to contact the catalytic subunit of DNA polymerase III (Pol III), a complex, multichain enzyme responsible for most of the replicative synthesis in bacteria; Pol III exhibits 3'-5' exonuclease proofreading activity. The beta chain is required for initiation of replication as well as for processivity of DNA replication. In Staphylococcus epidermidis (strain ATCC 35984 / DSM 28319 / BCRC 17069 / CCUG 31568 / BM 3577 / RP62A), this protein is Beta sliding clamp (dnaN).